Reading from the N-terminus, the 1366-residue chain is MLAVGPAMDRDYPQHEPPPAGSLLYSPPPLQSAMLHCPYWNTFSLPPYPAFSSDSRPFMSSASFLGSQPCPDTSYAPVATASSLPPKTCDFAQDSSYFEDFSNISIFSSSVDSLSDIVDTPDFLPADSLNQVSTIWDDNPAPSTHDKLFQLSRPFAGFEDFLPSHSTPLLVSYQEQSVQSQPEEEDEAEEEEAEELGHTETYADYVPSKSKIGKQHPDRVVETSTLSSVPPPDITYTLALPSDSGALSALQLEAITYACQQHEVLLPSGQRAGFLIGDGAGVGKGRTVAGVILENHLRGRKKALWFSVSNDLKYDAERDLRDIEATGIAVHALSKIKYGDTTTSEGVLFATYSALIGESQAGGQHRTRLRQILDWCGEAFEGVIVFDECHKAKNAGSTKMGKAVLDLQNKLPLARVVYASATGASEPRNMIYMSRLGIWGEGTPFRNFEEFLHAIEKRGVGAMEIVAMDMKVSGMYIARQLSFSGVTFRIEEIPLAPAFECVYNRAALLWAEALNVFQQAADWIGLESRKSLWGQFWSAHQRFFKYLCIAAKVRRLVELAREELARDKCVVIGLQSTGEARTREVLGENDGHLNCFVSAAEGVFLSLIQKHFPSTKRKRDRGAGSKRKRRPRGRGAKAPRLACETAGVIRISDDSSTESDPGLDSDFNSSPESLVDDDVVIVDAVGLPSDDRGPLCLLQRDPHGPGVLERVERLKQDLLDKVRRLGRELPVNTLDELIDQLGGPQRVAEMTGRKGRVVSRPDGTVAFESRAEQGLSIDHVNLREKQRFMSGEKLVAIISEASSSGVSLQADRRVQNQRRRVHMTLELPWSADRAIQQFGRTHRSNQVSAPEYVFLISELAGERRFASIVAKRLESLGALTHGDRRATESRDLSKYNFENKYGTRALHCVLTTILSQTENKVPVPQGYPGGVPTFFRDMKQGLLSVGIGGRESRNGCLDVEKDCSITKFLNRILGLEVHKQNALFQYFSDTFDHLIEMDKREGKYDMGILDLAPGIEEIYEESQQVFLAPGHPQDGQVVFYKISVDRGLKWEDAFAKSLALTGPYDGFYLSYKVRGNKPSCLLAEQNRGQFFTVYKPNIGRQSQLEALDSLRRKFHRVTAEEAKEPWESGYALSLTHCSHSAWNRHCRLAQEGKDCLQGLRLRHHYMLCGALLRVWGRIAAVMADVSSSSYLQIVRLKTKDRKKQVGIKIPEGCVRRVLQELRLMDADVKRRQAPALGCPAPPAPRPLALPCGPGEVLDLTYSPPAEAFPPPPHFSFPAPLSLDAGPGVVPLGTPDAQADPAALAHQGCDINFKEVLEDMLRSLHAGPPSEGALGEGAGAGGAAGGGPERQSVIQFSPPFPGAQAPL.

Disordered regions lie at residues 1-24 (MLAVGPAMDRDYPQHEPPPAGSLL), 174-217 (QEQS…KQHP), 614-640 (STKRKRDRGAGSKRKRRPRGRGAKAPR), and 1324-1366 (HAGP…QAPL). The segment covering 15–24 (HEPPPAGSLL) has biased composition (pro residues). Residues 182–194 (PEEEDEAEEEEAE) show a composition bias toward acidic residues. Positions 614 to 637 (STKRKRDRGAGSKRKRRPRGRGAK) are enriched in basic residues. A compositionally biased stretch (gly residues) spans 1333-1347 (LGEGAGAGGAAGGGP).

This sequence belongs to the SBNO family. In terms of assembly, interacts with TAL1; this interaction inhibits TAL1 occupancy of the DCSTAMP promoter, leading to the activation of the DCSTAMP promoter by the transcription factor MITF. In terms of tissue distribution, detected in macrophages. IL10 regulates expression in a STAT3-dependent way.

Its function is as follows. Acts as a transcriptional coregulator, that can have both coactivator and corepressor functions. Inhibits the DCSTAMP-repressive activity of TAL1, hence enhancing the access of the transcription factor MITF to the DC-STAMP promoter in osteoclast. Plays a role in bone homeostasis; required as a positive regulator in TNFSF11//RANKL-mediated osteoclast fusion via a DCSTAMP-dependent pathway. May also be required in the regulation of osteoblast differentiation. Involved in the transcriptional corepression of NF-kappaB in macrophages. Plays a role as a regulator in the pro-inflammatory cascade. The sequence is that of Protein strawberry notch homolog 2 (SBNO2) from Homo sapiens (Human).